Here is a 381-residue protein sequence, read N- to C-terminus: Deoxyguanosinetriphosphate triphosphohydrolase-like protein (381 aa).

The HD domain occupies 76–203 (RMTHTLEVAG…ADLSDEIAYT (128 aa)).

The protein belongs to the dGTPase family. Type 2 subfamily.

The protein is Deoxyguanosinetriphosphate triphosphohydrolase-like protein of Leptospira interrogans serogroup Icterohaemorrhagiae serovar copenhageni (strain Fiocruz L1-130).